Here is a 628-residue protein sequence, read N- to C-terminus: tRNA uridine 5-carboxymethylaminomethyl modification enzyme MnmG 1 (628 aa).

G11–G16 contacts FAD. G280 to F294 contributes to the NAD(+) binding site.

It belongs to the MnmG family. In terms of assembly, homodimer. Heterotetramer of two MnmE and two MnmG subunits. FAD serves as cofactor.

It is found in the cytoplasm. NAD-binding protein involved in the addition of a carboxymethylaminomethyl (cmnm) group at the wobble position (U34) of certain tRNAs, forming tRNA-cmnm(5)s(2)U34. The sequence is that of tRNA uridine 5-carboxymethylaminomethyl modification enzyme MnmG 1 from Fusobacterium nucleatum subsp. nucleatum (strain ATCC 25586 / DSM 15643 / BCRC 10681 / CIP 101130 / JCM 8532 / KCTC 2640 / LMG 13131 / VPI 4355).